The sequence spans 691 residues: POU domain, class 6, transcription factor 2 (691 aa).

Disordered stretches follow at residues 1–61 (MIAG…RGNT), 188–297 (QQQQ…LQLV), and 435–461 (GQAATSHSPVRQASSSSSSSSSSSALS). Residues 17 to 28 (MNAELRGEDKAA) show a composition bias toward basic and acidic residues. Composition is skewed to low complexity over residues 188 to 197 (QQQQQQQQQQ) and 206 to 216 (QHPQPASQAPP). A compositionally biased stretch (pro residues) spans 217–237 (QSQPTPPHQPPPASQQLPAPP). The segment covering 238–272 (AQLEQATQPQQHQPHSHPQNQTQNQPSPTQQSSSP) has biased composition (low complexity). The segment covering 437–447 (AATSHSPVRQA) has biased composition (polar residues). Low complexity predominate over residues 448-458 (SSSSSSSSSSS). One can recognise a POU-specific domain in the interval 476–586 (VDGVNLEEIR…VLERWMAEAE (111 aa)). The segment at residues 607-666 (KRKRRTSFTPQALEILNAHFEKNTHPSGQEMTEIAEKLNYDREVVRVWFCNKRQALKNTI) is a DNA-binding region (homeobox). A disordered region spans residues 670-691 (KQHEPTSAAPLEPLADSPEENC).

This sequence belongs to the POU transcription factor family. Class-6 subfamily. Expressed in kidney, heart, muscle, spleen and ovary, but not in lung.

It is found in the nucleus. In terms of biological role, probable transcription factor likely to be involved in early steps in the differentiation of amacrine and ganglion cells. Recognizes and binds to the DNA sequence 5'-ATGCAAAT-3'. In Mus musculus (Mouse), this protein is POU domain, class 6, transcription factor 2 (Pou6f2).